Here is a 283-residue protein sequence, read N- to C-terminus: ATP phosphoribosyltransferase (283 aa).

The protein belongs to the ATP phosphoribosyltransferase family. Long subfamily. Equilibrium between an active dimeric form, an inactive hexameric form and higher aggregates. Interconversion between the various forms is largely reversible and is influenced by the natural substrates and inhibitors of the enzyme. Mg(2+) serves as cofactor.

The protein localises to the cytoplasm. It catalyses the reaction 1-(5-phospho-beta-D-ribosyl)-ATP + diphosphate = 5-phospho-alpha-D-ribose 1-diphosphate + ATP. It functions in the pathway amino-acid biosynthesis; L-histidine biosynthesis; L-histidine from 5-phospho-alpha-D-ribose 1-diphosphate: step 1/9. With respect to regulation, feedback inhibited by histidine. In terms of biological role, catalyzes the condensation of ATP and 5-phosphoribose 1-diphosphate to form N'-(5'-phosphoribosyl)-ATP (PR-ATP). Has a crucial role in the pathway because the rate of histidine biosynthesis seems to be controlled primarily by regulation of HisG enzymatic activity. In Mycobacterium sp. (strain KMS), this protein is ATP phosphoribosyltransferase.